The chain runs to 1071 residues: SLIT-ROBO Rho GTPase-activating protein 2 (1071 aa).

The F-BAR domain maps to 22–325 (KEIRAQLTEQ…AVENLDATSD (304 aa)). A compositionally biased stretch (basic and acidic residues) spans 181 to 203 (LKEAEKQEEKQIGKSVKQEDRQT). The disordered stretch occupies residues 181-211 (LKEAEKQEEKQIGKSVKQEDRQTPRSPDSTA). A Phosphoserine modification is found at Ser206. The stretch at 362-401 (VQSELVQRCQQLQSRLSTLKIENEEVKKTMEATLQTIQDI) forms a coiled coil. Phosphoserine is present on residues Ser427, Ser500, Ser691, and Ser695. Residues 489–679 (ARRSSTVRKQ…TIIIQHENIF (191 aa)) form the Rho-GAP domain. The disordered stretch occupies residues 698 to 726 (DYCDSPHGETTSVEDSTQDVTAEHHTSDD). The segment covering 705 to 717 (GETTSVEDSTQDV) has biased composition (polar residues). A Phosphoserine modification is found at Ser724. The 60-residue stretch at 728-787 (CEPIEAIAKFDYVGRTARELSFKKGASLLLYQRASDDWWEGRHNGIDGLIPHQYIVVQDT) folds into the SH3 domain. A Phosphoserine modification is found at Ser795. The segment at 837–936 (QRKRPESGSI…RSKSFNNHRP (100 aa)) is disordered. The span at 855–866 (HGLSSSLTDSSS) shows a compositional bias: low complexity. 2 stretches are compositionally biased toward polar residues: residues 874–885 (RPSSQPIMSQSL) and 897–907 (GHGSLNSISRH). Residue Ser916 is modified to Phosphoserine. The segment covering 919 to 933 (IRKTATAGRSKSFNN) has biased composition (polar residues). Arg927 carries the post-translational modification Symmetric dimethylarginine; by PRMT5. Ser930 is modified (phosphoserine). A coiled-coil region spans residues 940-967 (EVIAQDIEATMNSALNELRELERQSSVK). Residues 983-1012 (SPVVAPTSEPSSPLHTQLLKDPEPAFQRSA) are disordered. Residues Ser990, Ser994, Ser1013, and Ser1027 each carry the phosphoserine modification. The disordered stretch occupies residues 1029 to 1071 (KMAAPVKPPATRPKPTVFPKTNATSPGVNSSTSPQSTDKSCTV). Residues 1047–1071 (PKTNATSPGVNSSTSPQSTDKSCTV) are compositionally biased toward polar residues.

As to quaternary structure, homodimer. Heterodimer; forms a heterodimer with SRGAP2C, altering SRGAP2 function. Forms a heterooligomer with SRGAP1 and SRGAP3 through its F-BAR domain. Interacts (via SH3 domain) with GPHN. Interacts (via SH3 domain) with FMNL1 (activated by RAC1); regulates the actin filament severing activity of FMNL1 and actin dynamics. Interacts (via SH3 domain) with FMNL3. Interacts with RAC1; specifically stimulates RAC1 GTPase activity. Interacts (via F-BAR domain) with HOMER1. Interacts with ROBO1 and ROBO2. Interacts with FASLG. Interacts with PRMT5. In terms of processing, methylation at Arg-927 is required for the stimulation of cell migration, dimerization and localization at the plasma membrane protrusions.

The protein resides in the cell membrane. It is found in the cell projection. The protein localises to the dendritic spine. Its subcellular location is the postsynaptic density. It localises to the postsynaptic cell membrane. The protein resides in the lamellipodium. It is found in the cytoplasmic vesicle. The protein localises to the phagosome. Its subcellular location is the nucleus. It localises to the cytoplasm. The protein resides in the cytosol. Its activity is regulated as follows. Activity is strongly inhibited by SRGAP2C, which heterodimerize with SRGAP2/SRGAP2A, thereby reducing SRGAP2/SRGAP2A levels through proteasome-dependent degradation. Its function is as follows. Postsynaptic RAC1 GTPase activating protein (GAP) that plays a key role in neuronal morphogenesis and migration mainly during development of the cerebral cortex. Regulates excitatory and inhibitory synapse maturation and density in cortical pyramidal neurons. SRGAP2/SRGAP2A limits excitatory and inhibitory synapse density through its RAC1-specific GTPase activating activity, while it promotes maturation of both excitatory and inhibitory synapses through its ability to bind to the postsynaptic scaffolding protein HOMER1 at excitatory synapses, and the postsynaptic protein GPHN at inhibitory synapses. Mechanistically, acts by binding and deforming membranes, thereby regulating actin dynamics to regulate cell migration and differentiation. Promotes cell repulsion and contact inhibition of locomotion: localizes to protrusions with curved edges and controls the duration of RAC1 activity in contact protrusions. In non-neuronal cells, may also play a role in cell migration by regulating the formation of lamellipodia and filopodia. This Homo sapiens (Human) protein is SLIT-ROBO Rho GTPase-activating protein 2.